We begin with the raw amino-acid sequence, 504 residues long: Acetylcholine receptor subunit epsilon (504 aa).

Positions 1–19 (MESGVRILSLLILLHNSLA) are cleaved as a signal peptide. The Extracellular portion of the chain corresponds to 20-240 (SESEESRLIK…IVFNLIIQRK (221 aa)). Residues Asn-88 and Asn-161 are each glycosylated (N-linked (GlcNAc...) asparagine). A disulfide bridge connects residues Cys-148 and Cys-162. Residues 241–265 (PLFYIINIIVPCVLISFLVVLVYFL) form a helical membrane-spanning segment. Over 266-273 (PAKAGGQK) the chain is Cytoplasmic. Residues 274–292 (CTVSISVLLAQTVFLFLIA) traverse the membrane as a helical segment. The Extracellular portion of the chain corresponds to 293-307 (QMVPETSLSVPLIGK). A helical transmembrane segment spans residues 308–329 (YLMFVMFVSTLIVLSCVIVLNV). Residues 330 to 473 (SLRSPSTHNL…WILIGKVLDV (144 aa)) lie on the Cytoplasmic side of the membrane. A helical membrane pass occupies residues 474–497 (LCFWVALPLFVLGTLAIFLMGHFN). At 498–504 (TAPEHPF) the chain is on the extracellular side.

Belongs to the ligand-gated ion channel (TC 1.A.9) family. Acetylcholine receptor (TC 1.A.9.1) subfamily. Epsilon/CHRNE sub-subfamily. In terms of assembly, pentamer of two alpha chains, and one each of the beta, delta, and gamma (in immature muscle) or epsilon (in mature muscle) chains.

The protein resides in the postsynaptic cell membrane. It localises to the cell membrane. It catalyses the reaction K(+)(in) = K(+)(out). The enzyme catalyses Na(+)(in) = Na(+)(out). In terms of biological role, after binding acetylcholine, the AChR responds by an extensive change in conformation that affects all subunits and leads to opening of an ion-conducting channel across the plasma membrane. In Xenopus laevis (African clawed frog), this protein is Acetylcholine receptor subunit epsilon (chrne).